Here is a 1226-residue protein sequence, read N- to C-terminus: E3 ubiquitin-protein ligase mind-bomb (1226 aa).

A compositionally biased stretch (polar residues) spans 1 to 12 (MSCAATLSSAKD). Disordered stretches follow at residues 1–42 (MSCA…NTNT) and 66–87 (GGGG…AGGV). The span at 19–30 (SGGGGGGGGGGA) shows a compositional bias: gly residues. Low complexity-rich tracts occupy residues 31 to 42 (PTNSNTNTNTNT) and 73 to 86 (GGTT…AAGG). The 69-residue stretch at 100 to 168 (VRRFSMEGVG…AYDLRILDSA (69 aa)) folds into the MIB/HERC2 1 domain. The ZZ-type zinc finger occupies 174–226 (HEGTMCDTCRQQPIFGIRWKCAECINYDLCSICYHGDKHHLRHRFYRITTPGG). Residues C179, C182, C194, C197, C203, C206, H212, and H216 each coordinate Zn(2+). In terms of domain architecture, MIB/HERC2 2 spans 237 to 315 (SKKVLARGIF…MADLKVVNDA (79 aa)). ANK repeat units lie at residues 567-596 (AGHT…DVEI), 600-629 (DGDR…DLNA), 633-662 (RRQT…HPSL), 666-695 (EGDT…DITL), 699-731 (NGFN…IVEE), 735-765 (DGYT…NMDR), 769-798 (NLQT…DLNI), and 802-833 (DGDT…KLLM). The interval 890-919 (TDDSELPGNVAGTSSSARARAASGSLNQSS) is disordered. Over residues 900 to 914 (AGTSSSARARAASGS) the composition is skewed to low complexity. 2 consecutive RING-type zinc fingers follow at residues 970 to 1005 (CLVC…LICR) and 1017 to 1052 (CLVC…VLCR). A coiled-coil region spans residues 1159 to 1181 (VNNFQMDDVQKLKQQLQDIKEQT). An RING-type 3 zinc finger spans residues 1183–1216 (CPVCFDRIKNMVFLCGHGTCQMCGDQIEGCPICR).

In terms of assembly, interacts with intracellular domain of Dl and Ser. As to expression, ubiquitous in the wing imaginal disk (at protein level).

Its subcellular location is the cytoplasm. The protein localises to the cell cortex. It catalyses the reaction S-ubiquitinyl-[E2 ubiquitin-conjugating enzyme]-L-cysteine + [acceptor protein]-L-lysine = [E2 ubiquitin-conjugating enzyme]-L-cysteine + N(6)-ubiquitinyl-[acceptor protein]-L-lysine.. It functions in the pathway protein modification; protein ubiquitination. E3 ubiquitin-protein ligase that mediates ubiquitination of Delta (Dl) and Serrate (Ser) receptors, which act as ligands of Notch proteins. Positively regulates the Notch signaling by ubiquitinating the intracellular domain of Dl and Ser, leading to endocytosis of Dl and Ser receptors. Regulates a subset of Notch signaling events, including wing margin specification, leg segmentation and vein determination, that are distinct from those events requiring neuralize (neur) activity. Also modulates lateral inhibition, a neur- and Dl-dependent signaling event, suggesting a distinct but partially complementary function with neur. The protein is E3 ubiquitin-protein ligase mind-bomb (mib1) of Drosophila melanogaster (Fruit fly).